Reading from the N-terminus, the 106-residue chain is Toxin-like structure LSTX-D4 (106 aa).

Residues 1-20 (MMKVLVVVALLVTLISYSSS) form the signal peptide. The propeptide occupies 21-41 (EGIGDLEADELLSLMANEQTR). Cystine bridges form between Cys-45-Cys-60, Cys-52-Cys-69, Cys-59-Cys-85, and Cys-71-Cys-83.

It belongs to the neurotoxin 19 (CSTX) family. 02 (D7) subfamily. Expressed by the venom gland.

The protein resides in the secreted. In Lycosa singoriensis (Wolf spider), this protein is Toxin-like structure LSTX-D4.